Consider the following 238-residue polypeptide: DNA damage-regulated autophagy modulator protein 1 (238 aa).

Helical transmembrane passes span 9–29, 53–73, 91–111, 116–136, 161–181, and 200–220; these read AFVP…SYVV, SGIF…TMYT, VFNL…GIVA, LAVP…GVVY, MAIS…ASLI, and VSAI…LTFI.

It belongs to the DRAM/TMEM150 family.

Its subcellular location is the lysosome membrane. Its function is as follows. Lysosomal modulator of autophagy that plays a central role in p53/TP53-mediated apoptosis. Not involved in p73/TP73-mediated autophagy. This is DNA damage-regulated autophagy modulator protein 1 (Dram1) from Mus musculus (Mouse).